A 76-amino-acid chain; its full sequence is uncharacterized protein (76 aa).

This is an uncharacterized protein from Escherichia coli (strain K12).